A 208-amino-acid polypeptide reads, in one-letter code: NAD(P)H-quinone oxidoreductase subunit I (208 aa).

4Fe-4S ferredoxin-type domains follow at residues 55-84 and 95-124; these read GRIH…VDWV and RNYS…MTEE. The [4Fe-4S] cluster site is built by Cys64, Cys67, Cys70, Cys74, Cys104, Cys107, Cys110, and Cys114.

Belongs to the complex I 23 kDa subunit family. In terms of assembly, NDH-1 is composed of at least 11 different subunits. [4Fe-4S] cluster serves as cofactor.

The protein resides in the cellular thylakoid membrane. The enzyme catalyses a plastoquinone + NADH + (n+1) H(+)(in) = a plastoquinol + NAD(+) + n H(+)(out). The catalysed reaction is a plastoquinone + NADPH + (n+1) H(+)(in) = a plastoquinol + NADP(+) + n H(+)(out). Its function is as follows. NDH-1 shuttles electrons from an unknown electron donor, via FMN and iron-sulfur (Fe-S) centers, to quinones in the respiratory and/or the photosynthetic chain. The immediate electron acceptor for the enzyme in this species is believed to be plastoquinone. Couples the redox reaction to proton translocation, and thus conserves the redox energy in a proton gradient. This is NAD(P)H-quinone oxidoreductase subunit I from Prochlorococcus marinus (strain MIT 9215).